The following is a 939-amino-acid chain: Translation initiation factor IF-2 (939 aa).

The interval 48–355 (KFAPAPKVEN…KPEKKEKEEE (308 aa)) is disordered. Residues 79–93 (QQNQAPKQPQQGTQN) show a composition bias toward low complexity. Residues 114-130 (SRDKNSRRDNNNRDGQR) show a composition bias toward basic and acidic residues. Positions 131-257 (DNNGGYRNND…NNDRNNNGGF (127 aa)) are enriched in low complexity. A compositionally biased stretch (basic and acidic residues) spans 287–355 (RNNDRRDSAP…KPEKKEKEEE (69 aa)). A tr-type G domain is found at 440-609 (PRPPVVCVMG…LLTAEVNELK (170 aa)). A G1 region spans residues 449–456 (GHVDHGKT). 449-456 (GHVDHGKT) serves as a coordination point for GTP. The tract at residues 474–478 (GITQK) is G2. Positions 495 to 498 (DTPG) are G3. GTP is bound by residues 495 to 499 (DTPGH) and 549 to 552 (NKID). The G4 stretch occupies residues 549–552 (NKID). The G5 stretch occupies residues 585–587 (SAH).

The protein belongs to the TRAFAC class translation factor GTPase superfamily. Classic translation factor GTPase family. IF-2 subfamily.

The protein resides in the cytoplasm. Its function is as follows. One of the essential components for the initiation of protein synthesis. Protects formylmethionyl-tRNA from spontaneous hydrolysis and promotes its binding to the 30S ribosomal subunits. Also involved in the hydrolysis of GTP during the formation of the 70S ribosomal complex. The protein is Translation initiation factor IF-2 of Lachnospira eligens (strain ATCC 27750 / DSM 3376 / VPI C15-48 / C15-B4) (Eubacterium eligens).